The following is a 1672-amino-acid chain: Probable outer membrane protein PmpB (1672 aa).

An N-terminal signal peptide occupies residues 1 to 14 (MSSMKWLSATAVFA). Disordered stretches follow at residues 69 to 122 (IPVK…GGAF), 203 to 263 (NTAE…GSGG), 384 to 415 (EAQTNKSSVTAASQSGPNTTPTPTPPVTAKGG), and 734 to 765 (STGVATTATTSQSPTVSSFLPRATAGSSPAPA). Low complexity-rich tracts occupy residues 77 to 88 (DDSSTSTPTTSS), 100 to 111 (SSSSSPNSGDTS), and 203 to 234 (NTAEVVPEETTPNPNPGTQTTTSQPSPTSKVQ). Composition is skewed to polar residues over residues 235-256 (SLFTYSSSTQANGNGADSQTPS) and 384-399 (EAQTNKSSVTAASQSG). Residues 734-744 (STGVATTATTS) are compositionally biased toward low complexity. An Autotransporter domain is found at 1379-1672 (DDAAYNNFWV…MTSCGARMIF (294 aa)).

The protein belongs to the PMP outer membrane protein family.

Its subcellular location is the secreted. It localises to the cell wall. The protein resides in the cell outer membrane. This Chlamydia muridarum (strain MoPn / Nigg) protein is Probable outer membrane protein PmpB (pmpB).